The primary structure comprises 303 residues: N-acetyl-D-glucosamine kinase (303 aa).

ATP-binding positions include 4-11 (GFDIGGTK) and 133-140 (GVGGGLIF). Residues histidine 157, cysteine 177, cysteine 179, and cysteine 184 each contribute to the Zn(2+) site.

It belongs to the ROK (NagC/XylR) family. NagK subfamily.

It catalyses the reaction N-acetyl-D-glucosamine + ATP = N-acetyl-D-glucosamine 6-phosphate + ADP + H(+). The protein operates within cell wall biogenesis; peptidoglycan recycling. In terms of biological role, catalyzes the phosphorylation of N-acetyl-D-glucosamine (GlcNAc) derived from cell-wall degradation, yielding GlcNAc-6-P. The sequence is that of N-acetyl-D-glucosamine kinase from Escherichia coli (strain K12 / DH10B).